Reading from the N-terminus, the 33-residue chain is Brevinin-2Ea (33 aa).

A disulfide bond links C27 and C33.

It belongs to the frog skin active peptide (FSAP) family. Brevinin subfamily. Expressed by the skin glands.

It localises to the secreted. Functionally, shows antibacterial activity against representative Gram-negative and Gram-positive bacterial species, and hemolytic activity. The chain is Brevinin-2Ea from Pelophylax lessonae (Pool frog).